Reading from the N-terminus, the 143-residue chain is Large ribosomal subunit protein uL11 (143 aa).

Belongs to the universal ribosomal protein uL11 family. As to quaternary structure, part of the ribosomal stalk of the 50S ribosomal subunit. Interacts with L10 and the large rRNA to form the base of the stalk. L10 forms an elongated spine to which L12 dimers bind in a sequential fashion forming a multimeric L10(L12)X complex. Post-translationally, one or more lysine residues are methylated.

In terms of biological role, forms part of the ribosomal stalk which helps the ribosome interact with GTP-bound translation factors. This Methylococcus capsulatus (strain ATCC 33009 / NCIMB 11132 / Bath) protein is Large ribosomal subunit protein uL11.